We begin with the raw amino-acid sequence, 236 residues long: Orotidine 5'-phosphate decarboxylase (236 aa).

Substrate-binding positions include Asp-16, Lys-38, 65–74 (DLKLHDIGNT), Thr-123, Arg-184, Gln-193, Gly-213, and Arg-214. Residue Lys-67 is the Proton donor of the active site.

This sequence belongs to the OMP decarboxylase family. Type 1 subfamily. As to quaternary structure, homodimer.

The enzyme catalyses orotidine 5'-phosphate + H(+) = UMP + CO2. It functions in the pathway pyrimidine metabolism; UMP biosynthesis via de novo pathway; UMP from orotate: step 2/2. Functionally, catalyzes the decarboxylation of orotidine 5'-monophosphate (OMP) to uridine 5'-monophosphate (UMP). This Methylobacterium nodulans (strain LMG 21967 / CNCM I-2342 / ORS 2060) protein is Orotidine 5'-phosphate decarboxylase.